A 204-amino-acid polypeptide reads, in one-letter code: Large ribosomal subunit protein eL15 (204 aa).

It belongs to the eukaryotic ribosomal protein eL15 family. As to quaternary structure, component of the large ribosomal subunit.

The protein localises to the cytoplasm. Functionally, component of the large ribosomal subunit. The ribosome is a large ribonucleoprotein complex responsible for the synthesis of proteins in the cell. The chain is Large ribosomal subunit protein eL15 (rpl15) from Tachysurus fulvidraco (Yellow catfish).